Consider the following 21-residue polypeptide: 71 kDa F-actin-binding protein (21 aa).

This sequence to yeast fimbrin. In terms of processing, the N-terminus is blocked.

Binds directly to F-actin and induces actin filament bundling. May function as a regulator of actin filament organization. This chain is 71 kDa F-actin-binding protein, found in Tetrahymena pyriformis.